The following is a 168-amino-acid chain: MPRSQINGNFIDKTFSIVANILLRIIPTTSGEREAFTYYRDGMSAQSEGNYAEALQNYYEAMRLEIDPYDRSYILYNIGLIHTSNGEHTKALEYYFRALERNPFLPQAFNNMAVICHYRGEQAIRQGDSEIAEAWFDQAAEYWKQAISLTPGNYIEAHNWLKITGRFG.

TPR repeat units follow at residues Ala-35–Pro-68, Ser-72–Leu-105, and Gly-120–Asn-153.

Belongs to the Ycf3 family.

The protein resides in the plastid. It is found in the chloroplast thylakoid membrane. Functionally, essential for the assembly of the photosystem I (PSI) complex. May act as a chaperone-like factor to guide the assembly of the PSI subunits. The chain is Photosystem I assembly protein Ycf3 from Coffea arabica (Arabian coffee).